A 146-amino-acid polypeptide reads, in one-letter code: MAALRLLLGIDYGTKQIGVAVGQAITGQARELCTLKAQNGVPDWDKVQALINEWKPDAIVVGLPLNMDGTPSEMSARAEKFSRKLNGRFGVTVYTHDERLTTFEAKGERMARGGQKGSYRDNPVDAIAAALLLQGWLDEHPELLNV.

It belongs to the YqgF nuclease family.

It localises to the cytoplasm. Could be a nuclease involved in processing of the 5'-end of pre-16S rRNA. The sequence is that of Putative pre-16S rRNA nuclease from Pseudomonas syringae pv. tomato (strain ATCC BAA-871 / DC3000).